Consider the following 263-residue polypeptide: Thymidylate synthase (263 aa).

DUMP is bound by residues Arg-25 and 123–124 (RR). Cys-143 functions as the Nucleophile in the catalytic mechanism. Residues 163–166 (RSGD), Asn-174, and 204–206 (HIY) contribute to the dUMP site. Asp-166 lines the (6R)-5,10-methylene-5,6,7,8-tetrahydrofolate pocket. Ser-262 provides a ligand contact to (6R)-5,10-methylene-5,6,7,8-tetrahydrofolate.

The protein belongs to the thymidylate synthase family. Bacterial-type ThyA subfamily. Homodimer.

Its subcellular location is the cytoplasm. The enzyme catalyses dUMP + (6R)-5,10-methylene-5,6,7,8-tetrahydrofolate = 7,8-dihydrofolate + dTMP. The protein operates within pyrimidine metabolism; dTTP biosynthesis. Its function is as follows. Catalyzes the reductive methylation of 2'-deoxyuridine-5'-monophosphate (dUMP) to 2'-deoxythymidine-5'-monophosphate (dTMP) while utilizing 5,10-methylenetetrahydrofolate (mTHF) as the methyl donor and reductant in the reaction, yielding dihydrofolate (DHF) as a by-product. This enzymatic reaction provides an intracellular de novo source of dTMP, an essential precursor for DNA biosynthesis. The sequence is that of Thymidylate synthase from Clostridium beijerinckii (strain ATCC 51743 / NCIMB 8052) (Clostridium acetobutylicum).